Reading from the N-terminus, the 92-residue chain is Small ribosomal subunit protein uS19 (92 aa).

Belongs to the universal ribosomal protein uS19 family.

Protein S19 forms a complex with S13 that binds strongly to the 16S ribosomal RNA. In Exiguobacterium sibiricum (strain DSM 17290 / CCUG 55495 / CIP 109462 / JCM 13490 / 255-15), this protein is Small ribosomal subunit protein uS19.